We begin with the raw amino-acid sequence, 529 residues long: CTP synthase (529 aa).

The interval 1–267 (MKEAKFIFVT…DTQILEHFHL (267 aa)) is amidoligase domain. A CTP-binding site is contributed by S15. A UTP-binding site is contributed by S15. Residues 16 to 21 (SLGKGL) and D73 contribute to the ATP site. 2 residues coordinate Mg(2+): D73 and E141. CTP is bound by residues 148–150 (DIE), 188–193 (KTKPTQ), and K224. UTP-binding positions include 188–193 (KTKPTQ) and K224. One can recognise a Glutamine amidotransferase type-1 domain in the interval 292–529 (TVSIVGKYTE…SFVKAAIDKK (238 aa)). An L-glutamine-binding site is contributed by G354. C381 serves as the catalytic Nucleophile; for glutamine hydrolysis. Residues 382–385 (LGMQ), E405, and R459 contribute to the L-glutamine site. Catalysis depends on residues H504 and E506.

It belongs to the CTP synthase family. As to quaternary structure, homotetramer.

It carries out the reaction UTP + L-glutamine + ATP + H2O = CTP + L-glutamate + ADP + phosphate + 2 H(+). The enzyme catalyses L-glutamine + H2O = L-glutamate + NH4(+). It catalyses the reaction UTP + NH4(+) + ATP = CTP + ADP + phosphate + 2 H(+). It participates in pyrimidine metabolism; CTP biosynthesis via de novo pathway; CTP from UDP: step 2/2. Its activity is regulated as follows. Allosterically activated by GTP, when glutamine is the substrate; GTP has no effect on the reaction when ammonia is the substrate. The allosteric effector GTP functions by stabilizing the protein conformation that binds the tetrahedral intermediate(s) formed during glutamine hydrolysis. Inhibited by the product CTP, via allosteric rather than competitive inhibition. Its function is as follows. Catalyzes the ATP-dependent amination of UTP to CTP with either L-glutamine or ammonia as the source of nitrogen. Regulates intracellular CTP levels through interactions with the four ribonucleotide triphosphates. The chain is CTP synthase from Wolbachia pipientis wMel.